Consider the following 245-residue polypeptide: 2,3-bisphosphoglycerate-dependent phosphoglycerate mutase (245 aa).

Substrate is bound by residues 8 to 15 (RHGQSLWN), 21 to 22 (TG), Arg60, 87 to 90 (ERHY), Lys98, 114 to 115 (RR), and 183 to 184 (GN). His9 acts as the Tele-phosphohistidine intermediate in catalysis. Glu87 functions as the Proton donor/acceptor in the catalytic mechanism.

This sequence belongs to the phosphoglycerate mutase family. BPG-dependent PGAM subfamily.

It carries out the reaction (2R)-2-phosphoglycerate = (2R)-3-phosphoglycerate. It functions in the pathway carbohydrate degradation; glycolysis; pyruvate from D-glyceraldehyde 3-phosphate: step 3/5. In terms of biological role, catalyzes the interconversion of 2-phosphoglycerate and 3-phosphoglycerate. The polypeptide is 2,3-bisphosphoglycerate-dependent phosphoglycerate mutase (Bacillus thuringiensis (strain Al Hakam)).